Consider the following 248-residue polypeptide: Ubiquinone biosynthesis O-methyltransferase (248 aa).

S-adenosyl-L-methionine is bound by residues arginine 41, glycine 72, aspartate 93, and methionine 136.

The protein belongs to the methyltransferase superfamily. UbiG/COQ3 family.

The catalysed reaction is a 3-demethylubiquinol + S-adenosyl-L-methionine = a ubiquinol + S-adenosyl-L-homocysteine + H(+). It catalyses the reaction a 3-(all-trans-polyprenyl)benzene-1,2-diol + S-adenosyl-L-methionine = a 2-methoxy-6-(all-trans-polyprenyl)phenol + S-adenosyl-L-homocysteine + H(+). It functions in the pathway cofactor biosynthesis; ubiquinone biosynthesis. Its function is as follows. O-methyltransferase that catalyzes the 2 O-methylation steps in the ubiquinone biosynthetic pathway. The protein is Ubiquinone biosynthesis O-methyltransferase of Sinorhizobium medicae (strain WSM419) (Ensifer medicae).